We begin with the raw amino-acid sequence, 604 residues long: uncharacterized protein (604 aa).

The protein belongs to the glycosyltransferase 2 family.

This is an uncharacterized protein from Rickettsia conorii (strain ATCC VR-613 / Malish 7).